Reading from the N-terminus, the 179-residue chain is MLSLDFLDDVRRMNKRQLYYQVLNFGMIVSSALMIWKGLMLITGSESPIVVVLSGSMEPAFHRGDLLFLTNRVEDPIRVGEIVVFRIEGREIPIVHRVLKIHEKQDGHIKFLTKGDNNAVDDRGLYKQGQHWLEKKDVVGRARGFVPYIGIVTILMNDYPKFSYAVLFLLGLFVLVHRE.

The Cytoplasmic segment spans residues 1 to 16 (MLSLDFLDDVRRMNKR). The chain crosses the membrane as a helical; Signal-anchor for type II membrane protein span at residues 17–36 (QLYYQVLNFGMIVSSALMIW). Residues 37-179 (KGLMLITGSE…LGLFVLVHRE (143 aa)) are Lumenal-facing. Catalysis depends on charge relay system residues Ser56, His96, and Asp122. The interval 165 to 176 (AVLFLLGLFVLV) is C-terminal short (CTS) helix.

This sequence belongs to the peptidase S26B family. Component of the signal peptidase complex paralog A (SPC-A) composed of a catalytic subunit SEC11A and three accessory subunits SPCS1, SPCS2 and SPCS3. Within the complex, interacts with SPCS2 and SPCS3. The complex induces a local thinning of the ER membrane which is used to measure the length of the signal peptide (SP) h-region of protein substrates. This ensures the selectivity of the complex towards h-regions shorter than 18-20 amino acids.

The protein resides in the endoplasmic reticulum membrane. It catalyses the reaction Cleavage of hydrophobic, N-terminal signal or leader sequences from secreted and periplasmic proteins.. Catalytic component of the signal peptidase complex (SPC) which catalyzes the cleavage of N-terminal signal sequences from nascent proteins as they are translocated into the lumen of the endoplasmic reticulum. Specifically cleaves N-terminal signal peptides that contain a hydrophobic alpha-helix (h-region) shorter than 18-20 amino acids. This chain is Signal peptidase complex catalytic subunit SEC11A (Sec11a), found in Rattus norvegicus (Rat).